A 92-amino-acid polypeptide reads, in one-letter code: Large ribosomal subunit protein bL28 (92 aa).

Belongs to the bacterial ribosomal protein bL28 family.

In Borrelia duttonii (strain Ly), this protein is Large ribosomal subunit protein bL28.